The primary structure comprises 117 residues: UPF0127 protein PYRAB11210 (117 aa).

This sequence belongs to the UPF0127 family.

This Pyrococcus abyssi (strain GE5 / Orsay) protein is UPF0127 protein PYRAB11210.